The primary structure comprises 169 residues: S-ribosylhomocysteine lyase (169 aa).

Positions 54, 58, and 128 each coordinate Fe cation.

The protein belongs to the LuxS family. As to quaternary structure, homodimer. The cofactor is Fe cation.

The catalysed reaction is S-(5-deoxy-D-ribos-5-yl)-L-homocysteine = (S)-4,5-dihydroxypentane-2,3-dione + L-homocysteine. Functionally, involved in the synthesis of autoinducer 2 (AI-2) which is secreted by bacteria and is used to communicate both the cell density and the metabolic potential of the environment. The regulation of gene expression in response to changes in cell density is called quorum sensing. Catalyzes the transformation of S-ribosylhomocysteine (RHC) to homocysteine (HC) and 4,5-dihydroxy-2,3-pentadione (DPD). The chain is S-ribosylhomocysteine lyase from Shewanella sp. (strain MR-4).